The sequence spans 459 residues: tRNA modification GTPase MnmE (459 aa).

The (6S)-5-formyl-5,6,7,8-tetrahydrofolate site is built by R20, E85, and R124. The TrmE-type G domain occupies 221-380 (GLSTVIIGRP…LEEAIQSLFY (160 aa)). N231 lines the K(+) pocket. Residues 231–236 (NVGKSS), 250–256 (TDIPGTT), and 275–278 (DTAG) contribute to the GTP site. S235 is a binding site for Mg(2+). T250, I252, and T255 together coordinate K(+). T256 is a binding site for Mg(2+). A (6S)-5-formyl-5,6,7,8-tetrahydrofolate-binding site is contributed by K459.

This sequence belongs to the TRAFAC class TrmE-Era-EngA-EngB-Septin-like GTPase superfamily. TrmE GTPase family. As to quaternary structure, homodimer. Heterotetramer of two MnmE and two MnmG subunits. K(+) serves as cofactor.

It is found in the cytoplasm. Exhibits a very high intrinsic GTPase hydrolysis rate. Involved in the addition of a carboxymethylaminomethyl (cmnm) group at the wobble position (U34) of certain tRNAs, forming tRNA-cmnm(5)s(2)U34. The protein is tRNA modification GTPase MnmE of Bacillus subtilis (strain 168).